The sequence spans 1120 residues: Terminal uridylyltransferase 1 (1120 aa).

2 disordered regions span residues 1-156 and 196-221; these read MSKY…SAVE and AALINGDPGPLSSAVSSSSSGSPHTP. Residues 7 to 16 are compositionally biased toward polar residues; sequence LFNQGTKDGT. Low complexity predominate over residues 17–59; the sequence is NASSGSEANSANITSSSAPASSTNTSSPTSSESAVVSPPASTS. Basic residues predominate over residues 60 to 70; sequence PRRRLIHRRHG. The segment covering 90 to 103 has biased composition (basic and acidic residues); the sequence is NEEKHENFISDSVH. Over residues 118–128 the composition is skewed to polar residues; that stretch reads LTTSGSETVMS. 2 stretches are compositionally biased toward low complexity: residues 134–154 and 207–217; these read AFEAPSPPTASASPPLESTSA and SSAVSSSSSGS. The C2H2-type; atypical zinc-finger motif lies at 222-253; the sequence is PRLFTCDMCLQYVSTSYEALEQHALDQHGDAL. The Zn(2+) site is built by C227, C230, H244, and H249. UTP-binding positions include S330 and 341–344; that span reads SDID. D342 and D344 together coordinate Mg(2+). Residue R390 participates in RNA binding. A Mg(2+)-binding site is contributed by D548. UTP contacts are provided by residues 555-559, K580, K584, and 598-599; these read GIRNS and SY. Positions 659 to 697 constitute a PAP-associated domain; sequence GELLLGFFYYYAFEFDWVNHVVSLNRPGITTKASLGWDV. The important for catalytic activity and RNA binding stretch occupies residues 750-1120; the sequence is GMMASSASAA…ARRVLRLLFR (371 aa). The Nucleotide recognition motif (NRM) signature appears at 773 to 782; that stretch reads IEDPYEENLN. The involved in oligomerization stretch occupies residues 800 to 900; the sequence is YRGLLSLLKD…LLSDLEAAFL (101 aa). The disordered stretch occupies residues 1047–1076; sequence PSTTTQGEDPLASGTCEQGGVSPSLPTGAP.

The protein belongs to the DNA polymerase type-B-like family. In terms of assembly, homotetramer. Part of a 700kDa complex. Interacts with p45 and p50 RNA ligases. Mg(2+) serves as cofactor. The cofactor is Mn(2+).

It localises to the mitochondrion. It catalyses the reaction RNA(n) + UTP = RNA(n)-3'-uridine ribonucleotide + diphosphate. With respect to regulation, zinc-binding is required for catalytic activity. Its function is as follows. Terminal uridylyltransferase which is involved in the post-transcriptional editing of mitochondrial RNA, a process involving the addition and deletion of uridine (U) nucleotides in the pre-mRNA. Specifically, catalyzes the addition of Us to the 3'-hydroxyl group of guided RNA (gRNA), with a preference for RNAs terminating in 6 Us, but also can add Us to RNAs terminating in 6 adenines (A), 6 cytosines (C), or 6 guanines (G). Can mediate RNA-independent UTP polymerization in vitro. Can mediate pyrophosphate-dependent degradation of synthetic RNA ending with U residues in vitro. This chain is Terminal uridylyltransferase 1, found in Leishmania tarentolae (Sauroleishmania tarentolae).